Consider the following 466-residue polypeptide: Zinc finger and SCAN domain-containing protein 26 (466 aa).

A Glycyl lysine isopeptide (Lys-Gly) (interchain with G-Cter in SUMO2) cross-link involves residue Lys-21. The region spanning 42 to 124 (CKQFRQLRYE…GILEDLQLDR (83 aa)) is the SCAN box domain. Composition is skewed to basic and acidic residues over residues 124 to 135 (RGKAGEQKDSAQ) and 163 to 173 (KPEERGKETRS). The tract at residues 124 to 182 (RGKAGEQKDSAQRSRPTVLVGEPAPRREAREQPGCALPQKPEERGKETRSENGNLIAGT) is disordered. The C2H2-type 1; degenerate zinc finger occupies 220-242 (SQCLETKERLVQNSGLIEHDRAH). 7 C2H2-type zinc fingers span residues 270–292 (HPCQ…QKIH), 298–320 (YQCK…LRIH), 326–348 (YLCI…QKIH), 354–376 (RECK…QRVH), 382–404 (HHCN…HRIH), 410–432 (FKCN…VRIH), and 438–460 (YKCS…QRHH).

Its subcellular location is the nucleus. Functionally, may be involved in transcriptional regulation. This is Zinc finger and SCAN domain-containing protein 26 (Zscan26) from Mus musculus (Mouse).